The chain runs to 374 residues: Phosphoserine aminotransferase (374 aa).

Residue Arg46 coordinates L-glutamate. Residues 80 to 81 (AT), Phe104, Thr150, Asp174, and Gln197 contribute to the pyridoxal 5'-phosphate site. At Lys198 the chain carries N6-(pyridoxal phosphate)lysine. 249 to 250 (NT) lines the pyridoxal 5'-phosphate pocket.

It belongs to the class-V pyridoxal-phosphate-dependent aminotransferase family. SerC subfamily. In terms of assembly, homodimer. The cofactor is pyridoxal 5'-phosphate.

The protein resides in the cytoplasm. It carries out the reaction O-phospho-L-serine + 2-oxoglutarate = 3-phosphooxypyruvate + L-glutamate. The enzyme catalyses 4-(phosphooxy)-L-threonine + 2-oxoglutarate = (R)-3-hydroxy-2-oxo-4-phosphooxybutanoate + L-glutamate. The protein operates within amino-acid biosynthesis; L-serine biosynthesis; L-serine from 3-phospho-D-glycerate: step 2/3. It functions in the pathway cofactor biosynthesis; pyridoxine 5'-phosphate biosynthesis; pyridoxine 5'-phosphate from D-erythrose 4-phosphate: step 3/5. Catalyzes the reversible conversion of 3-phosphohydroxypyruvate to phosphoserine and of 3-hydroxy-2-oxo-4-phosphonooxybutanoate to phosphohydroxythreonine. The sequence is that of Phosphoserine aminotransferase from Nocardioides sp. (strain ATCC BAA-499 / JS614).